Reading from the N-terminus, the 707-residue chain is B-cell lymphoma 6 protein homolog (707 aa).

In terms of domain architecture, BTB spans 32 to 99 (TDVVIVVSRE…MYTSRLNLRE (68 aa)). Positions 275 to 350 (HYSVPEGPKP…QPNSPTESCS (76 aa)) are disordered. Residues 299-315 (KASKEEERPSSEDEIAL) show a composition bias toward basic and acidic residues. Positions 331–350 (SPQSPQKSDCQPNSPTESCS) are enriched in polar residues. Residue Ser334 is modified to Phosphoserine. Residue Ser344 is modified to Phosphoserine; by MAPK1. Residue Ser362 is modified to Phosphoserine. Positions 377 to 380 (KKYK) are required for interaction with NuRD complex and for transcriptional repressor activity. Residue Lys380 is modified to N6-acetyllysine; by EP300. A Phosphoserine modification is found at Ser405. The interval 405-469 (SPRAYPAPPA…RSSSESHSPL (65 aa)) is disordered. Residues 409-420 (YPAPPACQPPME) show a composition bias toward pro residues. Residues 425 to 452 (DLQSPTKLSASGEDSTIPQASRLNNLVN) are compositionally biased toward polar residues. Residues 458–467 (SPRSSSESHS) are compositionally biased toward low complexity. C2H2-type zinc fingers lie at residues 519 to 542 (FFCN…LQTH), 547 to 569 (YKCD…KTVH), 575 to 597 (YRCN…TRIH), 603 to 625 (YKCE…VLIH), 631 to 653 (YPCE…LRIH), and 659 to 682 (YHCE…RQKH).

As to quaternary structure, homodimer. Interacts (via BTB domain) with the corepressors BCOR, NCOR1 and SMRT/NCOR2; the interactions are direct. Forms preferably ternary complexes with BCOR and SMRT/NCOR2 on target gene promoters but, on enhancer elements, interacts with SMRT/NCOR2 and HDAC3 to repress proximal gene expression. Interacts with histone deacetylases HDAC2, HDAC5 and HDAC9 (via the catalytic domain). Interacts with ZBTB7 and BCL6B. Interacts with SCF(FBXO11) complex; the interaction is independent of phosphorylation and promotes ubiquitination. Interacts (when phosphorylated) with PIN1; the interaction is required for BCL6 degradation upon genotoxic stress. Interacts with ZBTB17; inhibits ZBTB17 transcriptional activity. Interacts with CTBP1, autoinhibits its transcriptional expression. Interacts with NOTCH1 NCID and SIRT1; leads to a epigenetic repression of selective NOTCH1-target genes. Interacts (nor via BTB domain neither acetylated) with the NuRD complex components CHD4, HDAC1, MBD3 and MTA3; the interaction with MTA3 inhibits BCL6 acetylation and is required for BCL6 transpriptional repression. Phosphorylated by MAPK1 in response to antigen receptor activation at Ser-334 and Ser-344. Phosphorylated by ATM in response to genotoxic stress. Phosphorylation induces its degradation by ubiquitin/proteasome pathway. Post-translationally, polyubiquitinated. Polyubiquitinated by SCF(FBXO11), leading to its degradation by the proteasome. Ubiquitinated by the SCF(FBXL17) complex, leading to its degradation by the proteasome: ubiquitination by the SCF(FBXL17) complex takes place when aberrant BTB domain dimers are formed. In terms of processing, acetylated at Lys-380 by EP300 which inhibits the interaction with NuRD complex and the transcriptional repressor function. Deacetylated by HDAC- and SIR2-dependent pathways. In terms of tissue distribution, expressed at least in germinal center B-cells of spleen.

Its subcellular location is the nucleus. Transcriptional repressor mainly required for germinal center (GC) formation and antibody affinity maturation which has different mechanisms of action specific to the lineage and biological functions. Forms complexes with different corepressors and histone deacetylases to repress the transcriptional expression of different subsets of target genes. Represses its target genes by binding directly to the DNA sequence 5'-TTCCTAGAA-3' (BCL6-binding site) or indirectly by repressing the transcriptional activity of transcription factors. In GC B-cells, represses genes that function in differentiation, inflammation, apoptosis and cell cycle control, also autoregulates its transcriptional expression and up-regulates, indirectly, the expression of some genes important for GC reactions, such as AICDA, through the repression of microRNAs expression, like miR155. An important function is to allow GC B-cells to proliferate very rapidly in response to T-cell dependent antigens and tolerate the physiological DNA breaks required for immunglobulin class switch recombination and somatic hypermutation without inducing a p53/TP53-dependent apoptotic response. In follicular helper CD4(+) T-cells (T(FH) cells), promotes the expression of T(FH)-related genes but inhibits the differentiation of T(H)1, T(H)2 and T(H)17 cells. Also required for the establishment and maintenance of immunological memory for both T- and B-cells. Suppresses macrophage proliferation through competition with STAT5 for STAT-binding motifs binding on certain target genes, such as CCL2 and CCND2. In response to genotoxic stress, controls cell cycle arrest in GC B-cells in both p53/TP53-dependedent and -independent manners. Besides, also controls neurogenesis through the alteration of the composition of NOTCH-dependent transcriptional complexes at selective NOTCH targets, such as HES5, including the recruitment of the deacetylase SIRT1 and resulting in an epigenetic silencing leading to neuronal differentiation. The chain is B-cell lymphoma 6 protein homolog (Bcl6) from Mus musculus (Mouse).